The sequence spans 414 residues: GA-binding protein subunit beta-2 (414 aa).

5 ANK repeats span residues 5 to 34 (DLGK…PFTT), 37 to 66 (LGTS…SRDA), 70 to 99 (VDRT…DVNA), 103 to 132 (LQMT…DVYA), and 136 to 166 (FDKS…QVNT). Serine 218 is subject to Phosphoserine. Positions 310–362 (EEMKEGSERELLQQQLQEANRRAQEYRHQLLKKEQEAEQYRLRLEAMAQQQTN) form a coiled coil.

As to quaternary structure, heterotetramer of two alpha and two beta subunits. The C-terminal is necessary for the formation of a heterotetrameric GABP-alpha-2/beta-2 complex, and also facilitates homotypic dimerization. Interacts with ADGRB2. In terms of tissue distribution, high levels in thymus, spleen, kidney and intestine.

The protein localises to the nucleus. Functionally, transcription factor capable of interacting with purine rich repeats (GA repeats). Must associate with GABP-alpha to bind DNA. The sequence is that of GA-binding protein subunit beta-2 (Gabpb2) from Mus musculus (Mouse).